Reading from the N-terminus, the 100-residue chain is Integration host factor subunit alpha (100 aa).

The protein belongs to the bacterial histone-like protein family. In terms of assembly, heterodimer of an alpha and a beta chain.

Its function is as follows. This protein is one of the two subunits of integration host factor, a specific DNA-binding protein that functions in genetic recombination as well as in transcriptional and translational control. This chain is Integration host factor subunit alpha, found in Buchnera aphidicola subsp. Schizaphis graminum (strain Sg).